The primary structure comprises 147 residues: MRTYTPKPGDVQRQWHVIDATDVVLGRLASQTATLLRGKHKPTFAPHVDTGDFVIIINAEKVALTGSKLQKKRAYRHSGYPGGLKSTSYAELLEKNPTRAVEKAIKGMLPKNKLAAQQLSKLKVYAGAEHPHQAQQPKPYEFTQVAQ.

This sequence belongs to the universal ribosomal protein uL13 family. In terms of assembly, part of the 50S ribosomal subunit.

Functionally, this protein is one of the early assembly proteins of the 50S ribosomal subunit, although it is not seen to bind rRNA by itself. It is important during the early stages of 50S assembly. This Kocuria rhizophila (strain ATCC 9341 / DSM 348 / NBRC 103217 / DC2201) protein is Large ribosomal subunit protein uL13.